Here is a 523-residue protein sequence, read N- to C-terminus: Xanthotoxin 5-hydroxylase CYP82C2 (523 aa).

Residues 1-21 (MDTSLFSLFVPILVFVFIALF) traverse the membrane as a helical segment. Cys462 serves as a coordination point for heme.

It belongs to the cytochrome P450 family. It depends on heme as a cofactor.

The protein localises to the membrane. It catalyses the reaction xanthotoxin + reduced [NADPH--hemoprotein reductase] + O2 = 5-hydroxyxanthotoxin + oxidized [NADPH--hemoprotein reductase] + H2O + 2 H(+). The enzyme catalyses indole-3-carbonyl nitrile + reduced [NADPH--hemoprotein reductase] + O2 = 4-hydroxy-indole-3-carbonyl nitrile + oxidized [NADPH--hemoprotein reductase] + H2O + H(+). Involved in the biosynthetic pathway to 4-hydroxyindole-3-carbonyl nitrile (4-OH-ICN), a cyanogenic metabolite required for inducible pathogen defense. Converts indole-3-carbonyl nitrile (ICN) into 4-OH-ICN. Can hydroxylate xanthotoxin (8-methoxypsoralen) to form 5-hydroxyxanthotoxin (5-hydroxy-8-methoxypsoralen) in vivo and in vitro. This is Xanthotoxin 5-hydroxylase CYP82C2 from Arabidopsis thaliana (Mouse-ear cress).